Reading from the N-terminus, the 399-residue chain is Elongation factor Tu (399 aa).

The region spanning 10 to 209 (KPHVNIGTIG…AVDDYIPTPA (200 aa)) is the tr-type G domain. The tract at residues 19 to 26 (GHVDHGKT) is G1. Residue 19–26 (GHVDHGKT) coordinates GTP. Threonine 26 contacts Mg(2+). The tract at residues 60–64 (GITIA) is G2. The segment at 81-84 (DCPG) is G3. GTP contacts are provided by residues 81 to 85 (DCPGH) and 136 to 139 (NKAD). Positions 136–139 (NKAD) are G4. Residues 174–176 (SAL) form a G5 region.

It belongs to the TRAFAC class translation factor GTPase superfamily. Classic translation factor GTPase family. EF-Tu/EF-1A subfamily. Monomer.

Its subcellular location is the cytoplasm. The catalysed reaction is GTP + H2O = GDP + phosphate + H(+). GTP hydrolase that promotes the GTP-dependent binding of aminoacyl-tRNA to the A-site of ribosomes during protein biosynthesis. The polypeptide is Elongation factor Tu (Campylobacter lari (strain RM2100 / D67 / ATCC BAA-1060)).